The chain runs to 1037 residues: Sentrin-specific protease 7 (1037 aa).

The segment covering 1-10 (MDRARPGRRR) has biased composition (basic residues). Disordered regions lie at residues 1-28 (MDRARPGRRRASSEIVTEGKRKKSSPAD) and 182-420 (ASLS…SEEN). Ser-12, Ser-13, Ser-25, and Ser-189 each carry phosphoserine. 2 stretches are compositionally biased toward polar residues: residues 182 to 211 (ASLSDTASPKSEELSSSADGSLESCQNVNH) and 253 to 263 (TPQSKDFNSGN). Residues 289 to 299 (VSRKRKKRGRS) show a composition bias toward basic residues. Positions 300–309 (NFHNSHNPKS) are enriched in polar residues. Basic and acidic residues-rich tracts occupy residues 310–320 (SVDKSTEYIKE) and 330–340 (KLEESNEDSHQ). The span at 381–399 (NKSSESSVSSEVAENSSAA) shows a compositional bias: low complexity. 2 positions are modified to phosphoserine: Ser-432 and Ser-433. The interval 747-1037 (LGVTNEDLEC…HLQQQKGSSS (291 aa)) is protease. Residue His-847 is part of the active site. The disordered stretch occupies residues 873-910 (EFQDQQSQHDNKTIDNDPHTTSTVFTSAEESQSTETSM). Residues 879-890 (SQHDNKTIDNDP) show a composition bias toward basic and acidic residues. Over residues 898–910 (TSAEESQSTETSM) the composition is skewed to low complexity. Asp-926 is a catalytic residue. The Nucleophile role is filled by Cys-979.

This sequence belongs to the peptidase C48 family.

The protein localises to the cytoplasm. Its function is as follows. Protease that acts as a positive regulator of the cGAS-STING pathway by catalyzing desumoylation of CGAS. Desumoylation of CGAS promotes DNA-binding activity of CGAS, subsequent oligomerization and activation. Deconjugates SUMO2 and SUMO3 from targeted proteins, but not SUMO1. Catalyzes the deconjugation of poly-SUMO2 and poly-SUMO3 chains. Has very low efficiency in processing full-length SUMO proteins to their mature forms. This chain is Sentrin-specific protease 7 (Senp7), found in Rattus norvegicus (Rat).